Here is an 835-residue protein sequence, read N- to C-terminus: Peptide transporter family 1 (835 aa).

11 consecutive transmembrane segments (helical) span residues 86–106 (IFFN…SIVA), 113–133 (FWTI…LALA), 150–170 (GLLI…AFGG), 183–203 (LFFS…TFIS), 222–242 (FGIP…GSFW), 325–345 (MFLP…VWLI), 368–388 (LNAV…YPVA), 401–421 (VTGG…QLQV), 697–717 (ILWQ…FSIT), 738–758 (WLLT…LNLF), and 765–785 (FFVY…LSIF). The tract at residues 814 to 835 (PRYSIDNKGFHPDEKDTFDMHF) is disordered. Over residues 821–835 (KGFHPDEKDTFDMHF) the composition is skewed to basic and acidic residues.

This sequence belongs to the major facilitator superfamily. Proton-dependent oligopeptide transporter (POT/PTR) (TC 2.A.17) family. As to expression, expressed specifically in the intestine.

Its subcellular location is the apical cell membrane. Functionally, low-affinity peptide transporter that is necessary for proton-dependent uptake of di- or tripeptides, and to a minor extent tetrapeptides, in the intestine. Transport is independent of sodium and chloride ions. Controls the uptake of dietary fatty acids, plays a role in fatty acid synthesis and is responsible for dipeptide-induced acidification of the intestine. Regulates cellular pH differences together with the antiporter protein, nhx-2. Amino acid uptake and absorption levels influence the insulin signaling/daf-2 and let-363/TOR pathways, subsequently affecting the stress response and longevity of the organism. It is required for the uptake of the L-enantiomers of various amino acids, including L-glutamate. In response to the availability of amino acid nutrients, may play a role in promoting reproduction and fertility. The chain is Peptide transporter family 1 from Caenorhabditis elegans.